The sequence spans 210 residues: Urease accessory protein UreE (210 aa).

Residues 136–210 (PEGGAYAEPS…HGHSHAHDHK (75 aa)) form a disordered region. Basic and acidic residues-rich tracts occupy residues 145–169 (SHAH…TSHD) and 178–196 (HDHD…EHCG). A compositionally biased stretch (basic residues) spans 197–210 (HDHHHGHSHAHDHK).

Belongs to the UreE family.

The protein resides in the cytoplasm. Its function is as follows. Involved in urease metallocenter assembly. Binds nickel. Probably functions as a nickel donor during metallocenter assembly. This is Urease accessory protein UreE from Bradyrhizobium sp. (strain ORS 278).